The chain runs to 275 residues: MSGKAHVTDGDHGPALTEGVTTALNWLSVLPIRGATTFDRITGARVMASLPVVGVVFGVLTAVLLGLLGVLGVTPLLTAVLVVIMWELLNRMMHLDGLADVADALGSYAAPERAREILADPHTGLMGFSAVLFSLLVQVTAVAALVEGKAGWLVCFIPALSRLGGQIMARVGRTPLSPTGFGAMVVGTVRLWWVAAWLVALGVTAGGVAVWAAGPAVVWIVPAAGIIACVVSESAGRHVSRRFGGVNGDCIGAGIHLSAAVVAVFCAVAVAGMTG.

Helical transmembrane passes span Val52–Gly72, Val73–Met93, Met126–Val146, Phe181–Leu201, Val208–Ala228, and Ile251–Ala271.

Belongs to the CobS family. The cofactor is Mg(2+).

It localises to the cell membrane. The catalysed reaction is alpha-ribazole + adenosylcob(III)inamide-GDP = adenosylcob(III)alamin + GMP + H(+). It carries out the reaction alpha-ribazole 5'-phosphate + adenosylcob(III)inamide-GDP = adenosylcob(III)alamin 5'-phosphate + GMP + H(+). It participates in cofactor biosynthesis; adenosylcobalamin biosynthesis; adenosylcobalamin from cob(II)yrinate a,c-diamide: step 7/7. Functionally, joins adenosylcobinamide-GDP and alpha-ribazole to generate adenosylcobalamin (Ado-cobalamin). Also synthesizes adenosylcobalamin 5'-phosphate from adenosylcobinamide-GDP and alpha-ribazole 5'-phosphate. This chain is Adenosylcobinamide-GDP ribazoletransferase, found in Corynebacterium efficiens (strain DSM 44549 / YS-314 / AJ 12310 / JCM 11189 / NBRC 100395).